A 622-amino-acid chain; its full sequence is Chaperone protein HtpG (622 aa).

The interval 1–334 is a; substrate-binding; the sequence is MKGQETRGFQ…SNDLPLNVSR (334 aa). The b stretch occupies residues 335 to 550; that stretch reads EILQDSRITQ…ADEMSTQMAK (216 aa). The c stretch occupies residues 551 to 622; it reads LFAAAGQQAP…IRRMNQLLTA (72 aa).

This sequence belongs to the heat shock protein 90 family. In terms of assembly, homodimer.

The protein resides in the cytoplasm. In terms of biological role, molecular chaperone. Has ATPase activity. The protein is Chaperone protein HtpG of Yersinia pestis.